We begin with the raw amino-acid sequence, 265 residues long: 4-hydroxy-tetrahydrodipicolinate reductase (265 aa).

Residues 7-12 (GASGRM), D33, 96-98 (GTT), and 120-123 (AANM) contribute to the NAD(+) site. H153 serves as the catalytic Proton donor/acceptor. Residue H154 coordinates (S)-2,3,4,5-tetrahydrodipicolinate. K157 functions as the Proton donor in the catalytic mechanism. (S)-2,3,4,5-tetrahydrodipicolinate is bound at residue 163-164 (GT).

The protein belongs to the DapB family.

It is found in the cytoplasm. The catalysed reaction is (S)-2,3,4,5-tetrahydrodipicolinate + NAD(+) + H2O = (2S,4S)-4-hydroxy-2,3,4,5-tetrahydrodipicolinate + NADH + H(+). The enzyme catalyses (S)-2,3,4,5-tetrahydrodipicolinate + NADP(+) + H2O = (2S,4S)-4-hydroxy-2,3,4,5-tetrahydrodipicolinate + NADPH + H(+). The protein operates within amino-acid biosynthesis; L-lysine biosynthesis via DAP pathway; (S)-tetrahydrodipicolinate from L-aspartate: step 4/4. Catalyzes the conversion of 4-hydroxy-tetrahydrodipicolinate (HTPA) to tetrahydrodipicolinate. The sequence is that of 4-hydroxy-tetrahydrodipicolinate reductase from Cupriavidus metallidurans (strain ATCC 43123 / DSM 2839 / NBRC 102507 / CH34) (Ralstonia metallidurans).